The chain runs to 33 residues: Brevinin-2HSb (33 aa).

Cysteines 27 and 33 form a disulfide.

In terms of tissue distribution, expressed by the skin glands.

It is found in the secreted. In terms of biological role, has antibacterial activity against the Gram-positive bacterium S.aureus ATCC 25923 and the Gram-negative bacterium E.coli ATCC 25726. The protein is Brevinin-2HSb of Odorrana hosii (Hose's rock frog).